The primary structure comprises 283 residues: Phosphatidylglycerol--prolipoprotein diacylglyceryl transferase (283 aa).

4 helical membrane passes run 17 to 37 (LAVR…TFLG), 56 to 76 (FLTW…VLFY), 92 to 112 (WEGG…IWLF), and 117 to 137 (GIGF…GLAS). A 1,2-diacyl-sn-glycero-3-phospho-(1'-sn-glycerol) is bound at residue arginine 139. 3 consecutive transmembrane segments (helical) span residues 194 to 214 (PSQL…VWLF), 222 to 242 (GQVA…AEFA), and 255 to 275 (GLSM…VGFV).

The protein belongs to the Lgt family.

Its subcellular location is the cell inner membrane. It catalyses the reaction L-cysteinyl-[prolipoprotein] + a 1,2-diacyl-sn-glycero-3-phospho-(1'-sn-glycerol) = an S-1,2-diacyl-sn-glyceryl-L-cysteinyl-[prolipoprotein] + sn-glycerol 1-phosphate + H(+). Its pathway is protein modification; lipoprotein biosynthesis (diacylglyceryl transfer). Its function is as follows. Catalyzes the transfer of the diacylglyceryl group from phosphatidylglycerol to the sulfhydryl group of the N-terminal cysteine of a prolipoprotein, the first step in the formation of mature lipoproteins. This Neisseria meningitidis serogroup C / serotype 2a (strain ATCC 700532 / DSM 15464 / FAM18) protein is Phosphatidylglycerol--prolipoprotein diacylglyceryl transferase.